The chain runs to 263 residues: Hydroxyethylthiazole kinase (263 aa).

Methionine 39 lines the substrate pocket. ATP-binding residues include lysine 115 and threonine 160. Glycine 187 contributes to the substrate binding site.

Belongs to the Thz kinase family. The cofactor is Mg(2+).

It carries out the reaction 5-(2-hydroxyethyl)-4-methylthiazole + ATP = 4-methyl-5-(2-phosphooxyethyl)-thiazole + ADP + H(+). It participates in cofactor biosynthesis; thiamine diphosphate biosynthesis; 4-methyl-5-(2-phosphoethyl)-thiazole from 5-(2-hydroxyethyl)-4-methylthiazole: step 1/1. Its function is as follows. Catalyzes the phosphorylation of the hydroxyl group of 4-methyl-5-beta-hydroxyethylthiazole (THZ). In Staphylococcus aureus (strain JH9), this protein is Hydroxyethylthiazole kinase.